Here is a 626-residue protein sequence, read N- to C-terminus: DEAD-box ATP-dependent RNA helicase 16 (626 aa).

The tract at residues 1-48 is disordered; it reads MGKTKLKPVEDVNSEVVDEVEKAEEVEEQRNDREQEEEQKEEEAPKSF. Residues 9 to 47 are a coiled coil; sequence VEDVNSEVVDEVEKAEEVEEQRNDREQEEEQKEEEAPKS. Residues 12-27 show a composition bias toward acidic residues; sequence VNSEVVDEVEKAEEVE. Residues 46 to 74 carry the Q motif motif; the sequence is KSFEELGLDSRLIRALTKKGIEKPTLIQQ. Positions 77 to 259 constitute a Helicase ATP-binding domain; that stretch reads IPYILEGKDV…KLILHNPIVL (183 aa). Position 90 to 97 (90 to 97) interacts with ATP; that stretch reads AKTGSGKT. The short motif at 207–210 is the DEAD box element; it reads DEAD. One can recognise a Helicase C-terminal domain in the interval 293-477; the sequence is ALLKLEVVQK…PFPLLTENAV (185 aa). Positions 356-385 form a coiled coil; that stretch reads IATDDNSQTKKQKEEAKGEANKENKKNNKR. Positions 363–381 are enriched in basic and acidic residues; that stretch reads QTKKQKEEAKGEANKENKK. 2 disordered regions span residues 363 to 388 and 568 to 626; these read QTKK…RSKP and AMGN…QKTV.

The protein belongs to the DEAD box helicase family. DDX56/DBP9 subfamily.

The enzyme catalyses ATP + H2O = ADP + phosphate + H(+). In Arabidopsis thaliana (Mouse-ear cress), this protein is DEAD-box ATP-dependent RNA helicase 16 (RH16).